Reading from the N-terminus, the 556-residue chain is MEPTVAPGEVLMSQAIQPAHADSRGELSAGQLLKWMDTTACLAAEKHAGISCVTASMDDILFEDTARIGQIVTIRAKVTRAFSTSMEISIKVRVQDKFTGIQKLLCVAFSTFVVKPLGKEKVHLKPVLLQTEQEQVEHRLASERRKVRLQHENTFSNIMKESNWLRDPVCNEEEGTATTMATSVQSIELVLPPHANHHGNTFGGQIMAWMETVATISASRLCHGHPFLKSVDMFKFRGPSTVGDRLVFNAIVNNTFQNSVEVGVRVEAFDCREWAEGQGRHINSAFLIYNAVDDQEELITFPRIQPISKDDFRRYQGAIARRRIRLGRKYVISHKKEVPLGTQWDISKKGSISNTNVEALKNLASKSGWEITTTLEKIKIYTLEEQDAISVKVEKQVGSPARVAYHLLSDFTKRPLWDPHYISCEVIDQVSEDDQIYYITCSVVNGDKPKDFVVLVSQRKPLKDDNTYIVALMSVVLPSVPPSPQYIRSQVICAGFLIQPVDSSSCTVAYLNQMSDSILPYFAGNIGGWSKSIEEAAASCIKFIENATHDGLKSVL.

A HotDog ACOT-type 1 domain is found at 6 to 118; that stretch reads APGEVLMSQA…FSTFVVKPLG (113 aa). Lys-34 carries the post-translational modification N6-succinyllysine. CoA contacts are provided by residues 54-56 and 83-85; these read TAS and STS. Lys-97 bears the N6-succinyllysine mark. Arg-145 lines the CoA pocket. N6-succinyllysine occurs at positions 160 and 229. The 116-residue stretch at 180-295 folds into the HotDog ACOT-type 2 domain; that stretch reads MATSVQSIEL…FLIYNAVDDQ (116 aa). Residue 235–237 coordinates CoA; it reads KFR. The START domain maps to 341-550; the sequence is GTQWDISKKG…IKFIENATHD (210 aa).

As to quaternary structure, homodimer or homotetramer.

The protein localises to the cytoplasm. The protein resides in the cytosol. It carries out the reaction acetyl-CoA + H2O = acetate + CoA + H(+). The enzyme catalyses butanoyl-CoA + H2O = butanoate + CoA + H(+). It catalyses the reaction hexanoyl-CoA + H2O = hexanoate + CoA + H(+). It participates in lipid metabolism; fatty acid metabolism. Its activity is regulated as follows. Allosterically regulated by ATP (activator) and ADP (inhibitor). Cold labile, it dissociates into inactive monomers at low temperature. Its function is as follows. Catalyzes the hydrolysis of acyl-CoAs into free fatty acids and coenzyme A (CoASH), regulating their respective intracellular levels. Preferentially hydrolyzes acetyl-CoA. This Rattus norvegicus (Rat) protein is Acetyl-coenzyme A thioesterase (Acot12).